Reading from the N-terminus, the 207-residue chain is Cilia- and flagella-associated protein 418 (207 aa).

Residues 1-75 (MAEDLDELLD…LINEIFEEPH (75 aa)) form a required for interaction with FAM161A region.

In terms of assembly, interacts (via N-terminus) with FAM161A (via central region); the interaction is direct. As to expression, expressed in the retina (at protein level).

Its subcellular location is the cytoplasm. It is found in the photoreceptor inner segment. Its function is as follows. May be involved in photoreceptor outer segment disk morphogenesis. This chain is Cilia- and flagella-associated protein 418 (CFAP418), found in Bos taurus (Bovine).